The sequence spans 648 residues: DNA mismatch repair protein MutL (648 aa).

A disordered region spans residues Ser385–Ala430. The span at Leu396 to Ala430 shows a compositional bias: polar residues.

This sequence belongs to the DNA mismatch repair MutL/HexB family.

In terms of biological role, this protein is involved in the repair of mismatches in DNA. It is required for dam-dependent methyl-directed DNA mismatch repair. May act as a 'molecular matchmaker', a protein that promotes the formation of a stable complex between two or more DNA-binding proteins in an ATP-dependent manner without itself being part of a final effector complex. The protein is DNA mismatch repair protein MutL of Agathobacter rectalis (strain ATCC 33656 / DSM 3377 / JCM 17463 / KCTC 5835 / VPI 0990) (Eubacterium rectale).